The following is a 270-amino-acid chain: Sulfur carrier protein FdhD (270 aa).

Cys-116 serves as the catalytic Cysteine persulfide intermediate. 253–258 provides a ligand contact to Mo-bis(molybdopterin guanine dinucleotide); that stretch reads FAREGK.

This sequence belongs to the FdhD family.

Its subcellular location is the cytoplasm. In terms of biological role, required for formate dehydrogenase (FDH) activity. Acts as a sulfur carrier protein that transfers sulfur from IscS to the molybdenum cofactor prior to its insertion into FDH. In Haemophilus influenzae (strain ATCC 51907 / DSM 11121 / KW20 / Rd), this protein is Sulfur carrier protein FdhD.